The chain runs to 273 residues: Dermonecrotic toxin SdSicTox-betaIIB1bxiv (273 aa).

Residue His-4 is part of the active site. Residues Glu-24 and Asp-26 each coordinate Mg(2+). His-40 serves as the catalytic Nucleophile. Disulfide bonds link Cys-44-Cys-50 and Cys-46-Cys-189. Mg(2+) is bound at residue Asp-84.

It belongs to the arthropod phospholipase D family. Class II subfamily. Mg(2+) serves as cofactor. As to expression, expressed by the venom gland.

It localises to the secreted. The catalysed reaction is an N-(acyl)-sphingosylphosphocholine = an N-(acyl)-sphingosyl-1,3-cyclic phosphate + choline. The enzyme catalyses an N-(acyl)-sphingosylphosphoethanolamine = an N-(acyl)-sphingosyl-1,3-cyclic phosphate + ethanolamine. It carries out the reaction a 1-acyl-sn-glycero-3-phosphocholine = a 1-acyl-sn-glycero-2,3-cyclic phosphate + choline. It catalyses the reaction a 1-acyl-sn-glycero-3-phosphoethanolamine = a 1-acyl-sn-glycero-2,3-cyclic phosphate + ethanolamine. In terms of biological role, dermonecrotic toxins cleave the phosphodiester linkage between the phosphate and headgroup of certain phospholipids (sphingolipid and lysolipid substrates), forming an alcohol (often choline) and a cyclic phosphate. This toxin acts on sphingomyelin (SM). It may also act on ceramide phosphoethanolamine (CPE), lysophosphatidylcholine (LPC) and lysophosphatidylethanolamine (LPE), but not on lysophosphatidylserine (LPS), and lysophosphatidylglycerol (LPG). It acts by transphosphatidylation, releasing exclusively cyclic phosphate products as second products. Induces dermonecrosis, hemolysis, increased vascular permeability, edema, inflammatory response, and platelet aggregation. The polypeptide is Dermonecrotic toxin SdSicTox-betaIIB1bxiv (Sicarius cf. damarensis (strain GJB-2008) (Six-eyed sand spider)).